The following is a 212-amino-acid chain: ER lumen protein-retaining receptor 1-A (212 aa).

Over 1-4 the chain is Lumenal; that stretch reads MNIF. Residues 5–24 traverse the membrane as a helical segment; it reads RFLGDISHLSAIFILLLKIW. At 25-32 the chain is on the cytoplasmic side; that stretch reads KSRSCAGI. The helical transmembrane segment at 33 to 52 threads the bilayer; the sequence is SGKSQLLFAIVFTARYLDLF. Residues 47 to 48 form an interaction with the K-D-E-L motif on target proteins region; the sequence is RY. Topologically, residues 53-58 are lumenal; that stretch reads TNYISF. The chain crosses the membrane as a helical span at residues 59 to 79; sequence YNTSMKVVYVASSYATVWMIY. Residues 80–92 lie on the Cytoplasmic side of the membrane; it reads SKFKATYDGNHDT. A helical transmembrane segment spans residues 93-110; it reads FRVEFLIVPTAILAFLVN. The Lumenal segment spans residues 111–116; sequence HDFTPL. A helical transmembrane segment spans residues 117 to 135; that stretch reads EIFWTFSIYLESVAILPQL. The Cytoplasmic portion of the chain corresponds to 136–149; the sequence is FMVSKTGEAETITS. A helical membrane pass occupies residues 150–168; it reads HYLFALGIYRTLYLFNWIW. Residues 159 to 169 form an interaction with the K-D-E-L motif on target proteins region; that stretch reads RTLYLFNWIWR. Topologically, residues 169–178 are lumenal; sequence RYQFEGFFDL. Residues 179 to 199 traverse the membrane as a helical segment; sequence IAIVAGLVQTVLYCDFFYLYV. Over 200–212 the chain is Cytoplasmic; that stretch reads TKVLKGKKLSLPA. An important for recycling of cargo proteins with the sequence motif K-D-E-L from the Golgi to the endoplasmic reticulum region spans residues 204–207; it reads KGKK.

Belongs to the ERD2 family.

The protein resides in the golgi apparatus membrane. The protein localises to the cytoplasmic vesicle. It localises to the COPI-coated vesicle membrane. It is found in the endoplasmic reticulum membrane. Its subcellular location is the endoplasmic reticulum-Golgi intermediate compartment membrane. Receptor for the C-terminal sequence motif K-D-E-L that is present on endoplasmic reticulum resident proteins and that mediates their recycling from the Golgi back to the endoplasmic reticulum. This is ER lumen protein-retaining receptor 1-A (kdelr1-a) from Xenopus laevis (African clawed frog).